We begin with the raw amino-acid sequence, 347 residues long: uncharacterized protein (347 aa).

The signal sequence occupies residues 1-26; sequence MQGRVAGSCAPLGLLLVCLHLPGLFA. Residues 41–60 are compositionally biased toward polar residues; the sequence is GTNLPQLGQPSSTGPSNSEH. 2 disordered regions span residues 41–110 and 148–189; these read GTNL…MDSW and SGPL…AGGK. The segment covering 148 to 157 has biased composition (low complexity); that stretch reads SGPLPGESSP.

Binds to numerous extracellular matrix proteins.

Its subcellular location is the secreted. The protein resides in the extracellular space. The protein localises to the extracellular matrix. This is an uncharacterized protein from Pan troglodytes (Chimpanzee).